The chain runs to 79 residues: Acyl carrier protein (79 aa).

Residues 2–77 (ADHASKIKDI…DAVAYLEAKV (76 aa)) enclose the Carrier domain. S37 carries the O-(pantetheine 4'-phosphoryl)serine modification.

The protein belongs to the acyl carrier protein (ACP) family. 4'-phosphopantetheine is transferred from CoA to a specific serine of apo-ACP by AcpS. This modification is essential for activity because fatty acids are bound in thioester linkage to the sulfhydryl of the prosthetic group.

Its subcellular location is the cytoplasm. Its pathway is lipid metabolism; fatty acid biosynthesis. Carrier of the growing fatty acid chain in fatty acid biosynthesis. The sequence is that of Acyl carrier protein from Gemmatimonas aurantiaca (strain DSM 14586 / JCM 11422 / NBRC 100505 / T-27).